We begin with the raw amino-acid sequence, 334 residues long: Anthranilate phosphoribosyltransferase (334 aa).

Residues glycine 79, 82–83 (GD), serine 87, 89–92 (NIST), 107–115 (KAGNRSISS), and serine 119 contribute to the 5-phospho-alpha-D-ribose 1-diphosphate site. An anthranilate-binding site is contributed by glycine 79. Serine 91 contributes to the Mg(2+) binding site. Anthranilate is bound at residue asparagine 110. Arginine 165 contacts anthranilate. Aspartate 224 and glutamate 225 together coordinate Mg(2+).

Belongs to the anthranilate phosphoribosyltransferase family. As to quaternary structure, homodimer. Mg(2+) is required as a cofactor.

It catalyses the reaction N-(5-phospho-beta-D-ribosyl)anthranilate + diphosphate = 5-phospho-alpha-D-ribose 1-diphosphate + anthranilate. It participates in amino-acid biosynthesis; L-tryptophan biosynthesis; L-tryptophan from chorismate: step 2/5. In terms of biological role, catalyzes the transfer of the phosphoribosyl group of 5-phosphorylribose-1-pyrophosphate (PRPP) to anthranilate to yield N-(5'-phosphoribosyl)-anthranilate (PRA). The protein is Anthranilate phosphoribosyltransferase of Streptococcus thermophilus (strain CNRZ 1066).